A 157-amino-acid chain; its full sequence is Probable Brix domain-containing ribosomal biogenesis protein (157 aa).

The Brix domain occupies Met1–Tyr157.

In terms of biological role, probably involved in the biogenesis of the ribosome. This is Probable Brix domain-containing ribosomal biogenesis protein from Methanosarcina mazei (strain ATCC BAA-159 / DSM 3647 / Goe1 / Go1 / JCM 11833 / OCM 88) (Methanosarcina frisia).